Consider the following 108-residue polypeptide: MIKVSEQQVSFEGELKSLLKTGKVIFGAKRAIKYIKLSKVKMVIVASTLRGDLKQDIMHYAKLSNIPVYEYKGSGWDLGTLCGKPFMISTISIIDEGDSKILDIIKER.

It belongs to the eukaryotic ribosomal protein eL30 family.

This Saccharolobus solfataricus (strain ATCC 35092 / DSM 1617 / JCM 11322 / P2) (Sulfolobus solfataricus) protein is Large ribosomal subunit protein eL30 (rpl30e).